The chain runs to 120 residues: Transcription elongation factor 1 homolog (120 aa).

Residues Cys25, Cys28, Cys49, and Cys52 each coordinate Zn(2+). Acidic residues predominate over residues 84-110 (EDDVVQEEEEEVEEEEEEEEEEDDEDD). The interval 84-120 (EDDVVQEEEEEVEEEEEEEEEEDDEDDHVSVKRKYNF) is disordered.

Belongs to the ELOF1 family.

The protein localises to the nucleus. In terms of biological role, transcription elongation factor implicated in the maintenance of proper chromatin structure in actively transcribed regions. This Arabidopsis thaliana (Mouse-ear cress) protein is Transcription elongation factor 1 homolog.